A 55-amino-acid polypeptide reads, in one-letter code: Large ribosomal subunit protein bL33B (55 aa).

Belongs to the bacterial ribosomal protein bL33 family.

The protein is Large ribosomal subunit protein bL33B of Salinispora tropica (strain ATCC BAA-916 / DSM 44818 / JCM 13857 / NBRC 105044 / CNB-440).